We begin with the raw amino-acid sequence, 410 residues long: Methylamine dehydrogenase heavy chain (410 aa).

The N-terminal stretch at 1–35 is a signal peptide; that stretch reads MTHAYTKVRQALCYGSATLGAAALAALIAAGSAAA.

This sequence belongs to the aromatic amine dehydrogenase heavy chain family. Tetramer of two light and two heavy chains.

It is found in the periplasm. The enzyme catalyses 2 oxidized [amicyanin] + methylamine + H2O = 2 reduced [amicyanin] + formaldehyde + NH4(+) + 2 H(+). In terms of biological role, methylamine dehydrogenase carries out the oxidation of methylamine. Electrons are passed from methylamine dehydrogenase to amicyanin. This is Methylamine dehydrogenase heavy chain (mauB) from Methylorubrum extorquens (strain ATCC 14718 / DSM 1338 / JCM 2805 / NCIMB 9133 / AM1) (Methylobacterium extorquens).